The primary structure comprises 297 residues: GTPase Era (297 aa).

The region spanning Arg7–Ala174 is the Era-type G domain. A G1 region spans residues Gly15 to Ser22. Gly15–Ser22 serves as a coordination point for GTP. The tract at residues Gln41–Asn45 is G2. Positions Asp62 to Gly65 are G3. Residues Asp62–Ile66 and Asn124–Asp127 contribute to the GTP site. The segment at Asn124–Asp127 is G4. The G5 stretch occupies residues Val153–Ala155. The KH type-2 domain maps to Thr205–Lys282.

This sequence belongs to the TRAFAC class TrmE-Era-EngA-EngB-Septin-like GTPase superfamily. Era GTPase family. In terms of assembly, monomer.

The protein resides in the cytoplasm. Its subcellular location is the cell inner membrane. In terms of biological role, an essential GTPase that binds both GDP and GTP, with rapid nucleotide exchange. Plays a role in 16S rRNA processing and 30S ribosomal subunit biogenesis and possibly also in cell cycle regulation and energy metabolism. In Geotalea uraniireducens (strain Rf4) (Geobacter uraniireducens), this protein is GTPase Era.